Reading from the N-terminus, the 102-residue chain is Large ribosomal subunit protein bL21 (102 aa).

This sequence belongs to the bacterial ribosomal protein bL21 family. In terms of assembly, part of the 50S ribosomal subunit. Contacts protein L20.

Its function is as follows. This protein binds to 23S rRNA in the presence of protein L20. The protein is Large ribosomal subunit protein bL21 of Ehrlichia chaffeensis (strain ATCC CRL-10679 / Arkansas).